A 483-amino-acid polypeptide reads, in one-letter code: UDP-N-acetylmuramoyl-L-alanyl-D-glutamate--2,6-diaminopimelate ligase 2 (483 aa).

Position 30 (Ser-30) interacts with UDP-N-acetyl-alpha-D-muramoyl-L-alanyl-D-glutamate. 111-117 (GTNGKTT) is an ATP binding site. UDP-N-acetyl-alpha-D-muramoyl-L-alanyl-D-glutamate-binding positions include 156–157 (TT), Thr-183, and Arg-191. Lys-223 is subject to N6-carboxylysine. Residues Arg-380, 404–407 (DNPR), Gly-456, and Glu-460 contribute to the meso-2,6-diaminopimelate site. The short motif at 404 to 407 (DNPR) is the Meso-diaminopimelate recognition motif element.

It belongs to the MurCDEF family. MurE subfamily. Requires Mg(2+) as cofactor. In terms of processing, carboxylation is probably crucial for Mg(2+) binding and, consequently, for the gamma-phosphate positioning of ATP.

Its subcellular location is the cytoplasm. The enzyme catalyses UDP-N-acetyl-alpha-D-muramoyl-L-alanyl-D-glutamate + meso-2,6-diaminopimelate + ATP = UDP-N-acetyl-alpha-D-muramoyl-L-alanyl-gamma-D-glutamyl-meso-2,6-diaminopimelate + ADP + phosphate + H(+). The protein operates within cell wall biogenesis; peptidoglycan biosynthesis. Catalyzes the addition of meso-diaminopimelic acid to the nucleotide precursor UDP-N-acetylmuramoyl-L-alanyl-D-glutamate (UMAG) in the biosynthesis of bacterial cell-wall peptidoglycan. This chain is UDP-N-acetylmuramoyl-L-alanyl-D-glutamate--2,6-diaminopimelate ligase 2, found in Clostridium acetobutylicum (strain ATCC 824 / DSM 792 / JCM 1419 / IAM 19013 / LMG 5710 / NBRC 13948 / NRRL B-527 / VKM B-1787 / 2291 / W).